The following is a 219-amino-acid chain: Germin-like protein subfamily 2 member 2 (219 aa).

The N-terminal stretch at 1 to 22 (MMNSRISIIIALSCIMITSIRA) is a signal peptide. Cysteines 32 and 47 form a disulfide. 2 N-linked (GlcNAc...) asparagine glycosylation sites follow: asparagine 52 and asparagine 70. The region spanning 59-209 (FFAGISKPAV…TFQVGSKMVD (151 aa)) is the Cupin type-1 domain. Mn(2+)-binding residues include histidine 109, histidine 111, glutamate 116, and histidine 155.

The protein belongs to the germin family. In terms of assembly, oligomer (believed to be a pentamer but probably hexamer).

Its subcellular location is the secreted. It is found in the extracellular space. It localises to the apoplast. In terms of biological role, may play a role in plant defense. Probably has no oxalate oxidase activity even if the active site is conserved. The chain is Germin-like protein subfamily 2 member 2 from Arabidopsis thaliana (Mouse-ear cress).